Reading from the N-terminus, the 489-residue chain is MAGKSFMTPAIMLAMLLLISPETYAGHDYRDALRKSILFFEGQRSGKLPPDQRLKWRRDSALRDGSSAGVDLTGGYYDAGDNVKFGFPMAFTTTMMSWSVIDFGKTMGPELENAVKAIKWGTDYLMKATQIPDVVFVQVGDAYSDHNCWERPEDMDTLRTVYKIDKDHSGSEVAGETAAALAAASIVFEKRDPVYSKMLLDRATRVFAFAQKYRGAYSDSLYQAVCPFYCDFNGYEDELLWGAAWLHKASKKRVYREFIVKNQVILRAGDTIHEFGWDNKHAGINVLVSKMVLMGKAEYFQSFKQNADEFICSLLPGISHPQVQYSQGGLLVKSGGSNMQHVTSLSFLLLTYSNYLSHANKVVPCGEFTASPALLRQVAKRQVDYILGDNPMKMSYMVGYGSRFPQKIHHRGSSVPSVVDHPDRIGCKDGSRYFFSNNPNPNLLIGAVVGGPNITDDFPDSRPYFQLTEPTTYINAPLLGLLGYFSAHY.

The signal sequence occupies residues Met1 to Ala25. The Nucleophile role is filled by Asp81. Residue His409 is part of the active site. N-linked (GlcNAc...) asparagine glycosylation is present at Asn453. Residues Asp460 and Glu469 contribute to the active site.

This sequence belongs to the glycosyl hydrolase 9 (cellulase E) family.

Its subcellular location is the secreted. The catalysed reaction is Endohydrolysis of (1-&gt;4)-beta-D-glucosidic linkages in cellulose, lichenin and cereal beta-D-glucans.. This Arabidopsis thaliana (Mouse-ear cress) protein is Endoglucanase 4.